The sequence spans 421 residues: MRAKGTRKNYQHLWRWGTMLLGMLMICSAAEQLWVTVYYGVPVWKEATTTLFCASDAKAYDTEVHNVWATHACVPTDPNPQEVVLQNVTENFNMWKNNTVEQMHEDIISLWDQSLKPCVKSTPLCVTLNCTDLTNATYANGSSEERGEIRNCSFNVTTIIRNKIQKEYALFYRLDIVPIDKDNTSYTLINCNTSVITQACPKVSFEPIPIHYCAPAGFAILKCNDKKFNGTGPCTNVSTVQCTHGIKPVVSTQLLLNGSLAEGEVVIRSENFTNNAKTIIVQLNKSVEINCTRPNNNTKKGIAIGPGRTLYAREKIIGDIRQAHCNISKAKWNDTLKQIVTKLKEQFRNKTIVFNQSSGGDPEIVMHSFNCGGEFFYCKTTQLFNSTWLFNSTWNDTERSDNNETIIIPCRIKQIINSGRK.

The first 31 residues, 1-31 (MRAKGTRKNYQHLWRWGTMLLGMLMICSAAE), serve as a signal peptide directing secretion. A disulfide bridge links Cys53 with Cys73. 20 N-linked (GlcNAc...) asparagine; by host glycosylation sites follow: Asn87, Asn97, Asn129, Asn135, Asn140, Asn151, Asn155, Asn183, Asn192, Asn229, Asn236, Asn257, Asn271, Asn284, Asn290, Asn296, Asn326, Asn333, Asn349, and Asn355. 5 cysteine pairs are disulfide-bonded: Cys118–Cys200, Cys125–Cys191, Cys130–Cys152, Cys213–Cys242, and Cys223–Cys234. The interval 130–151 (CTDLTNATYANGSSEERGEIRN) is V1. The tract at residues 152-191 (CSFNVTTIIRNKIQKEYALFYRLDIVPIDKDNTSYTLINC) is V2. The V3 stretch occupies residues 291–324 (CTRPNNNTKKGIAIGPGRTLYAREKIIGDIRQAH). Cys291 and Cys325 are oxidised to a cystine. The interval 357–367 (SSGGDPEIVMH) is CD4-binding loop. Cys378 and Cys410 are disulfide-bonded. The segment at 378 to 410 (CKTTQLFNSTWLFNSTWNDTERSDNNETIIIPC) is V4. Asn385, Asn391, Asn395, and Asn403 each carry an N-linked (GlcNAc...) asparagine; by host glycan.

Its subcellular location is the virion membrane. The chain is Truncated surface protein (env) from Human immunodeficiency virus type 1 group M subtype B (isolate NY5) (HIV-1).